Consider the following 311-residue polypeptide: Olfactory receptor 5AN1 (311 aa).

The Extracellular segment spans residues 1–26 (MTGGGNITEITYFILLGFSDFPRIIK). The N-linked (GlcNAc...) asparagine glycan is linked to N6. The chain crosses the membrane as a helical span at residues 27–47 (VLFTIFLVIYITSLAWNLSLI). Residues 48-55 (VLIRMDSH) are Cytoplasmic-facing. Residues 56 to 76 (LHTPMYFFLSNLSFIDVCYIS) traverse the membrane as a helical segment. The Extracellular segment spans residues 77 to 100 (STVPKMLSNLLQEQQTITFVGCII). An intrachain disulfide couples C98 to C190. A helical transmembrane segment spans residues 101-121 (QYFIFSTMGLSESCLMTAMAY). Over 122 to 134 (DRYAAICNPLLYS) the chain is Cytoplasmic. Residues 135–155 (SIMSPTLCVWMVLGAYMTGLT) traverse the membrane as a helical segment. Residues 156–197 (ASLFQIGALLQLHFCGSNVIRHFFCDMPQLLILSCTDTFFVQ) are Extracellular-facing. A helical membrane pass occupies residues 198–218 (VMTAILTMFFGIASALVIMIS). Over 219 to 238 (YGYIGISIMKITSAKGRSKA) the chain is Cytoplasmic. The helical transmembrane segment at 239-259 (FNTCASHLTAVSLFYTSGIFV) threads the bilayer. Over 260-272 (YLSSSSGGSSSFD) the chain is Extracellular. The chain crosses the membrane as a helical span at residues 273–293 (RFASVFYTVVIPMLNPLIYSL). The Cytoplasmic portion of the chain corresponds to 294 to 311 (RNKEIKDALKRLQKRKCC).

The protein belongs to the G-protein coupled receptor 1 family.

The protein resides in the cell membrane. Functionally, odorant receptor for musk, which specifically recognizes muscone, musk xylol, and musk ketone. Ligand-binding causes a conformation change that triggers signaling via G(s)-class of G alpha protein GNAL, activating adenylyl cyclase. The sequence is that of Olfactory receptor 5AN1 from Homo sapiens (Human).